We begin with the raw amino-acid sequence, 81 residues long: uncharacterized protein (81 aa).

Transmembrane regions (helical) follow at residues 27 to 47 (ASLLFFGQTILFVFLSYLNLT) and 54 to 74 (IFGAYLTIFFAGFTYYSIFIM).

Its subcellular location is the cell membrane. This is an uncharacterized protein from Bacillus subtilis (strain 168).